Consider the following 232-residue polypeptide: MTKLSKRVQALRTKVDRNRTYPVTEALALVKECATAKFDESIDIAVNLGIDARKSDQLVRGSVVLPAGTGKSVRVAVFAQGDKAEAARAAGADVVGFEDLAEQVKAGNIDFDLCIATPDAMRVVGQLGQILGPRGLMPNPKVGTVTMDVTTAVKNAKAGQVQYRTDKGGIIHATIGRASFSTEALQQNLGALVDALVKAKPAASKGIYLRRVALSSTMGSGVRVEPSSINAA.

The protein belongs to the universal ribosomal protein uL1 family. Part of the 50S ribosomal subunit.

Its function is as follows. Binds directly to 23S rRNA. The L1 stalk is quite mobile in the ribosome, and is involved in E site tRNA release. In terms of biological role, protein L1 is also a translational repressor protein, it controls the translation of the L11 operon by binding to its mRNA. This Aromatoleum aromaticum (strain DSM 19018 / LMG 30748 / EbN1) (Azoarcus sp. (strain EbN1)) protein is Large ribosomal subunit protein uL1.